We begin with the raw amino-acid sequence, 572 residues long: Urease subunit alpha (572 aa).

Residues 136–572 (GGIDTHIHFI…VPLGQRYFLF (437 aa)) form the Urease domain. Residues His-141, His-143, and Lys-224 each contribute to the Ni(2+) site. Lys-224 carries the N6-carboxylysine modification. Substrate is bound at residue His-226. Positions 253 and 279 each coordinate Ni(2+). The Proton donor role is filled by His-327. Asp-367 contributes to the Ni(2+) binding site.

This sequence belongs to the metallo-dependent hydrolases superfamily. Urease alpha subunit family. Heterotrimer of UreA (gamma), UreB (beta) and UreC (alpha) subunits. Three heterotrimers associate to form the active enzyme. It depends on Ni cation as a cofactor. Carboxylation allows a single lysine to coordinate two nickel ions.

It is found in the cytoplasm. The enzyme catalyses urea + 2 H2O + H(+) = hydrogencarbonate + 2 NH4(+). The protein operates within nitrogen metabolism; urea degradation; CO(2) and NH(3) from urea (urease route): step 1/1. This Haemophilus influenzae (strain ATCC 51907 / DSM 11121 / KW20 / Rd) protein is Urease subunit alpha.